We begin with the raw amino-acid sequence, 588 residues long: L-fucose isomerase (588 aa).

Residues Glu335 and Asp359 each act as proton acceptor in the active site. 3 residues coordinate Mn(2+): Glu335, Asp359, and His525.

This sequence belongs to the L-fucose isomerase family. Mn(2+) is required as a cofactor.

It is found in the cytoplasm. It catalyses the reaction L-fucose = L-fuculose. Its pathway is carbohydrate degradation; L-fucose degradation; L-lactaldehyde and glycerone phosphate from L-fucose: step 1/3. In terms of biological role, converts the aldose L-fucose into the corresponding ketose L-fuculose. The protein is L-fucose isomerase of Streptococcus pneumoniae (strain 70585).